A 92-amino-acid polypeptide reads, in one-letter code: Probable glutathione transferase (92 aa).

One can recognise a GST N-terminal domain in the interval 1 to 71 (RTCPYAQRAR…YLEEAFPDPP (71 aa)). Residue C3 is the Nucleophile of the active site. Residues K30, V43, and 55 to 56 (ES) each bind glutathione.

Belongs to the GST superfamily. Omega family.

It catalyses the reaction RX + glutathione = an S-substituted glutathione + a halide anion + H(+). The catalysed reaction is L-dehydroascorbate + 2 glutathione = glutathione disulfide + L-ascorbate. The enzyme catalyses methylarsonate + 2 glutathione + H(+) = methylarsonous acid + glutathione disulfide + H2O. Its function is as follows. Exhibits glutathione-dependent thiol transferase activity. Has dehydroascorbate reductase activity and may contribute to the recycling of ascorbic acid. Participates in the biotransformation of inorganic arsenic and reduces monomethylarsonic acid (MMA). The protein is Probable glutathione transferase of Aplysia californica (California sea hare).